Here is a 289-residue protein sequence, read N- to C-terminus: MPLIFKIGYNVIPLQDVILPTPSSKVLKYLIQSGKLIPSLKDLITSRDKYKPIFISHLGFNQRRIFQTNGNLKTITKGSRLSSIIAFSTQANVLSEVADEGIFETVYGKFHIMIESIEIVEVEKLKEEVEKHMNDNIRVRFVSPTLLSSKVLLPPSLSERYKKIHAGYSTLPSVGLIVAYAYNVYCNLIGKKEVEVRAFKFGILSNALSRIIGYDLHPVTVAIGEDSKGNLRKARGVMGWIEFDIPDERLKRRALNYLLTSSYLGIGRSRGIGFGEIRLEFRKIEEKEG.

Belongs to the CRISPR-associated endoribonuclease Cas6 family. Possibly part of the aCascade ribonucleoprotein complex. The cofactor is Mg(2+).

In terms of biological role, CRISPR (clustered regularly interspaced short palindromic repeat) is an adaptive immune system that provides protection against mobile genetic elements (viruses, transposable elements and conjugative plasmids). CRISPR clusters contain sequences complementary to antecedent mobile elements and target invading nucleic acids. CRISPR clusters are transcribed and processed into CRISPR RNA (crRNA). Functions as a ssRNA-specific endoribonuclease, generating an 8 base-long tag known as the 5' handle. In Saccharolobus solfataricus (strain ATCC 35092 / DSM 1617 / JCM 11322 / P2) (Sulfolobus solfataricus), this protein is CRISPR-associated endoribonuclease Cas6 2 (cas6b).